The chain runs to 347 residues: UDP-galactose/UDP-glucose transporter 5 (347 aa).

8 helical membrane passes run 17 to 37, 57 to 77, 116 to 136, 143 to 163, 177 to 197, 218 to 238, 247 to 267, and 293 to 313; these read LWKA…YGLL, LFLV…ALLA, VQTL…TLIM, FDYL…LFPA, TVWG…TSTF, ICSS…LPAV, CLFD…FISY, and CIWF…IVFG. The tract at residues 325–347 is disordered; the sequence is SEKPPAAQELPRDEEAQPLKGNP.

Belongs to the nucleotide-sugar transporter family. UDP-galactose:UMP antiporter (TC 2.A.7.11) subfamily.

It is found in the membrane. Its function is as follows. Sugar transporter involved in the transport of nucleotide-sugars from cytoplasm into the Golgi and/or the endoplasmic reticulum. In Arabidopsis thaliana (Mouse-ear cress), this protein is UDP-galactose/UDP-glucose transporter 5.